Reading from the N-terminus, the 339-residue chain is Cathepsin B (339 aa).

Residues 1-17 form the signal peptide; sequence MWWSLIPLSCLLALTSA. Positions 18 to 79 are cleaved as a propeptide — activation peptide; sequence HDKPSSHPLS…ERVGFSEDIN (62 aa). 6 cysteine pairs are disulfide-bonded: Cys-93–Cys-122, Cys-105–Cys-150, Cys-141–Cys-207, Cys-142–Cys-146, Cys-179–Cys-211, and Cys-187–Cys-198. Residue Cys-108 is part of the active site. N-linked (GlcNAc...) asparagine glycosylation occurs at Asn-192. Lys-220 carries the N6-acetyllysine modification. Active-site residues include His-278 and Asn-298. The propeptide occupies 334–339; sequence QYWGRF.

The protein belongs to the peptidase C1 family. In terms of assembly, dimer of a heavy chain and a light chain cross-linked by a disulfide bond. Interacts with SRPX2. Directly interacts with SHKBP1. As to expression, expressed in the epithelial cells of the prostate and mammary gland.

It localises to the lysosome. The protein localises to the melanosome. The protein resides in the secreted. Its subcellular location is the extracellular space. It is found in the apical cell membrane. The enzyme catalyses Hydrolysis of proteins with broad specificity for peptide bonds. Preferentially cleaves -Arg-Arg-|-Xaa bonds in small molecule substrates (thus differing from cathepsin L). In addition to being an endopeptidase, shows peptidyl-dipeptidase activity, liberating C-terminal dipeptides.. Thiol protease which is believed to participate in intracellular degradation and turnover of proteins. Cleaves matrix extracellular phosphoglycoprotein MEPE. Involved in the solubilization of cross-linked TG/thyroglobulin in the thyroid follicle lumen. Has also been implicated in tumor invasion and metastasis. The protein is Cathepsin B (Ctsb) of Rattus norvegicus (Rat).